A 514-amino-acid chain; its full sequence is Serine/threonine protein phosphatase PstP (514 aa).

The Cytoplasmic segment spans residues 1 to 302 (MARVTLVLRY…RPRWSGRRLA (302 aa)). The PPM-type phosphatase domain maps to 9–238 (RYAARSDRGL…DNVTVVVADV (230 aa)). Mn(2+) is bound by residues aspartate 38, glycine 39, aspartate 118, serine 160, aspartate 191, and aspartate 229. The chain crosses the membrane as a helical span at residues 303 to 323 (FVVALVTVLMTAGLLIGRAII). The Extracellular segment spans residues 324–514 (RSNYYVADYA…QPGIDCRAAA (191 aa)). The segment at 420 to 514 (LLPPCPAPRA…QPGIDCRAAA (95 aa)) is disordered. A compositionally biased stretch (low complexity) spans 440 to 480 (TTSETTEPNVTSSPASPSPTTSASAPTGTTPAIPTSASPAA).

It depends on Mn(2+) as a cofactor.

It is found in the cell membrane. The catalysed reaction is O-phospho-L-seryl-[protein] + H2O = L-seryl-[protein] + phosphate. The enzyme catalyses O-phospho-L-threonyl-[protein] + H2O = L-threonyl-[protein] + phosphate. Functionally, plays an important role in regulating cell division and growth by reversible phosphorylation signaling. May play important roles in regulating cellular metabolism and signaling pathways, which could mediate the growth and development of the cell. Plays a role in establishing and maintaining infection. The protein is Serine/threonine protein phosphatase PstP (pstP) of Mycobacterium tuberculosis (strain CDC 1551 / Oshkosh).